We begin with the raw amino-acid sequence, 551 residues long: Glucans biosynthesis protein D (551 aa).

Positions 1–32 (MDRRRFIKGSMAMAAVCGTSGIASLFSQAAFA) form a signal peptide, tat-type signal.

This sequence belongs to the OpgD/OpgG family. Predicted to be exported by the Tat system. The position of the signal peptide cleavage has not been experimentally proven.

The protein resides in the periplasm. It functions in the pathway glycan metabolism; osmoregulated periplasmic glucan (OPG) biosynthesis. Its function is as follows. Probably involved in the control of the structural glucose backbone of osmoregulated periplasmic glucans (OPGs). The polypeptide is Glucans biosynthesis protein D (Escherichia coli O127:H6 (strain E2348/69 / EPEC)).